Reading from the N-terminus, the 399-residue chain is uncharacterized protein (399 aa).

It belongs to the AdoMet synthetase 2 family.

This is an uncharacterized protein from Streptococcus pyogenes serotype M1.